Reading from the N-terminus, the 270-residue chain is Formamidopyrimidine-DNA glycosylase (270 aa).

The Schiff-base intermediate with DNA role is filled by P2. The Proton donor role is filled by E3. K58 functions as the Proton donor; for beta-elimination activity in the catalytic mechanism. Positions 91, 110, and 151 each coordinate DNA. Residues 236-270 (LVYGRDGLPCPNCGRALKHATIGQRASVWCSHCQR) form an FPG-type zinc finger. R260 serves as the catalytic Proton donor; for delta-elimination activity.

It belongs to the FPG family. In terms of assembly, monomer. Zn(2+) serves as cofactor.

The catalysed reaction is Hydrolysis of DNA containing ring-opened 7-methylguanine residues, releasing 2,6-diamino-4-hydroxy-5-(N-methyl)formamidopyrimidine.. It carries out the reaction 2'-deoxyribonucleotide-(2'-deoxyribose 5'-phosphate)-2'-deoxyribonucleotide-DNA = a 3'-end 2'-deoxyribonucleotide-(2,3-dehydro-2,3-deoxyribose 5'-phosphate)-DNA + a 5'-end 5'-phospho-2'-deoxyribonucleoside-DNA + H(+). Involved in base excision repair of DNA damaged by oxidation or by mutagenic agents. Acts as a DNA glycosylase that recognizes and removes damaged bases. Has a preference for oxidized purines, such as 7,8-dihydro-8-oxoguanine (8-oxoG). Has AP (apurinic/apyrimidinic) lyase activity and introduces nicks in the DNA strand. Cleaves the DNA backbone by beta-delta elimination to generate a single-strand break at the site of the removed base with both 3'- and 5'-phosphates. The chain is Formamidopyrimidine-DNA glycosylase from Stenotrophomonas maltophilia (strain R551-3).